Consider the following 389-residue polypeptide: 1-deoxy-D-xylulose 5-phosphate reductoisomerase (389 aa).

NADPH-binding residues include Ser-11, Gly-12, Ser-13, Val-14, Asn-39, and Asn-122. A 1-deoxy-D-xylulose 5-phosphate-binding site is contributed by Lys-123. Glu-124 provides a ligand contact to NADPH. Asp-148 is a binding site for Mn(2+). 1-deoxy-D-xylulose 5-phosphate contacts are provided by Ser-149, Glu-150, Ser-174, and His-197. Glu-150 is a binding site for Mn(2+). Gly-203 contacts NADPH. Residues Ser-210, Asn-215, Lys-216, and Glu-219 each contribute to the 1-deoxy-D-xylulose 5-phosphate site. Glu-219 contributes to the Mn(2+) binding site.

It belongs to the DXR family. The cofactor is Mg(2+). It depends on Mn(2+) as a cofactor.

It carries out the reaction 2-C-methyl-D-erythritol 4-phosphate + NADP(+) = 1-deoxy-D-xylulose 5-phosphate + NADPH + H(+). It functions in the pathway isoprenoid biosynthesis; isopentenyl diphosphate biosynthesis via DXP pathway; isopentenyl diphosphate from 1-deoxy-D-xylulose 5-phosphate: step 1/6. Catalyzes the NADPH-dependent rearrangement and reduction of 1-deoxy-D-xylulose-5-phosphate (DXP) to 2-C-methyl-D-erythritol 4-phosphate (MEP). The protein is 1-deoxy-D-xylulose 5-phosphate reductoisomerase of Leptospira borgpetersenii serovar Hardjo-bovis (strain JB197).